Consider the following 544-residue polypeptide: Chaperonin GroEL 1 (544 aa).

Residues 29–32, 86–90, G413, and D495 contribute to the ATP site; these read TLGP and DGTTT.

The protein belongs to the chaperonin (HSP60) family. Forms a cylinder of 14 subunits composed of two heptameric rings stacked back-to-back. Interacts with the co-chaperonin GroES.

Its subcellular location is the cytoplasm. It carries out the reaction ATP + H2O + a folded polypeptide = ADP + phosphate + an unfolded polypeptide.. In terms of biological role, together with its co-chaperonin GroES, plays an essential role in assisting protein folding. The GroEL-GroES system forms a nano-cage that allows encapsulation of the non-native substrate proteins and provides a physical environment optimized to promote and accelerate protein folding. The polypeptide is Chaperonin GroEL 1 (Synechococcus sp. (strain ATCC 27144 / PCC 6301 / SAUG 1402/1) (Anacystis nidulans)).